Reading from the N-terminus, the 349-residue chain is Quinolinate synthase (349 aa).

Iminosuccinate-binding residues include histidine 52 and serine 69. Cysteine 114 contacts [4Fe-4S] cluster. Residues 140-142 (YFN) and serine 157 each bind iminosuccinate. Position 201 (cysteine 201) interacts with [4Fe-4S] cluster. Residues 227–229 (HPE) and threonine 255 contribute to the iminosuccinate site. Cysteine 300 is a binding site for [4Fe-4S] cluster.

It belongs to the quinolinate synthase family. Type 2 subfamily. [4Fe-4S] cluster serves as cofactor.

Its subcellular location is the cytoplasm. It carries out the reaction iminosuccinate + dihydroxyacetone phosphate = quinolinate + phosphate + 2 H2O + H(+). It participates in cofactor biosynthesis; NAD(+) biosynthesis; quinolinate from iminoaspartate: step 1/1. Its function is as follows. Catalyzes the condensation of iminoaspartate with dihydroxyacetone phosphate to form quinolinate. The chain is Quinolinate synthase from Mycolicibacterium paratuberculosis (strain ATCC BAA-968 / K-10) (Mycobacterium paratuberculosis).